The following is a 98-amino-acid chain: UPF0473 protein lp_2273 (98 aa).

Belongs to the UPF0473 family.

The chain is UPF0473 protein lp_2273 from Lactiplantibacillus plantarum (strain ATCC BAA-793 / NCIMB 8826 / WCFS1) (Lactobacillus plantarum).